The chain runs to 458 residues: KAT8 regulatory NSL complex subunit 2 (458 aa).

Lys78 participates in a covalent cross-link: Glycyl lysine isopeptide (Lys-Gly) (interchain with G-Cter in SUMO2). Positions 126 to 182 (ELGSQTPESSRSEASRILDEDSWSDGDQEPITVDQTWRGDPDSEADSIDSDQEDPLK) are disordered. Thr131 is modified (phosphothreonine). The segment covering 135–144 (SRSEASRILD) has biased composition (basic and acidic residues). 5 positions are modified to phosphoserine: Ser147, Ser149, Ser168, Ser172, and Ser175. The span at 167 to 178 (DSEADSIDSDQE) shows a compositional bias: acidic residues. The segment at 308–364 (DVRCSNQSLPMTRHCLTHICQDTNQVLFKCCQGSEEVPCNKPVPVSLSEDPCCPLHF) is required for interaction with other NSL complex members. Positions 419 to 458 (QMAGDGCRSQGPRNSEKAPAPLPQSGIATANGKPEPTSVS) are disordered.

Component of the NSL complex at least composed of KAT8/MOF, KANSL1, KANSL2, KANSL3, MCRS1, PHF20, OGT1/OGT, WDR5 and HCFC1.

The protein localises to the nucleus. It is found in the mitochondrion. Its function is as follows. Non-catalytic component of the NSL histone acetyltransferase complex, a multiprotein complex that mediates histone H4 acetylation at 'Lys-5'- and 'Lys-8' (H4K5ac and H4K8ac) at transcription start sites and promotes transcription initiation. Required for NSL complex stability and for transcription of intraciliary transport genes in both ciliated and non-ciliated cells by regulating histone H4 acetylation at 'Lys-5'- and 'Lys-12' (H4K5ac and H4K12ac). This is necessary for cilium assembly in ciliated cells and for organization of the microtubule cytoskeleton in non-ciliated cells. Required within the NSL complex to maintain nuclear architecture stability by promoting KAT8-mediated acetylation of lamin LMNA. The protein is KAT8 regulatory NSL complex subunit 2 (KANSL2) of Bos taurus (Bovine).